Reading from the N-terminus, the 823-residue chain is MEVPISGGGGGERFCHAAQVVGADGEMDGEAMARFAAGAGLLGRGLSYAVVSIVGPQGSGKSTLLNQLFGTSFTEMDALKGRSQTTKGIWIAKAVGIEPFTVVMDLEGTDGRERGEDDTAFEKQSALFALAVSDIVMINLWCHDIGREHAANRPLLKTIFEVLMRLFSPRKTTLLLVIRDKTKTPLEYLTQALKEDIQKIWNAVRKPEVYKEAALSEFFNVEVTALSSYEEKENLFKEQVGQLRQRFIHSIAPGGLAADRRGVIPASGFCLSALQIWKVIRENKDLNLPAHKIMVATVRCEEIADEKLRSFISDKGWLELETAANSGLVPGFGKKLNAILDFYLSEYDTEAMYFDEDVRTAKRQQLESEILKHTYDAFKKMLEHLHHVVLNKFKSDLEQSLRSGEGFAASARYCVQSSMAEFDAGLRDALVKHAEWDTTKVRSKLEQHIEAHATSVRGTKLAELKANYEKKLLDTLAGPVQSILETGEKDSWACIRRLYRHATESAILAFSASLSEFELDQTTIRKMVMELREHARSIVEEKAREEAGNVLMRMKERFSTVLSRDKDSMPRTWKGNEDIRAITREARLAALRLMSVMAAVRLDDKPDKIDRALTTALLDGGPLSQKRSIEFTSDPLASSTWEEVSEKNTLITPVQCKSIWRQFNAETEYAVAQAISMQEAHRRSNNWLPPAWTVLLLAILGYNEFIFLLRNPLYLLGLFVAFVVSYAAWLQYDITAYFRHGTLSGLLTITSGFLPTIMDIITAVINMSHNQKSSSHPPRHRPPLHPQSFRNQAQQQSQAQVQYQAPSSLSSSSSVGSNSDDES.

At 1–688 the chain is on the cytoplasmic side; that stretch reads MEVPISGGGG…EAHRRSNNWL (688 aa). Positions 45–260 constitute a GB1/RHD3-type G domain; that stretch reads GLSYAVVSIV…IAPGGLAADR (216 aa). 55–62 lines the GTP pocket; it reads GPQGSGKS. Positions 226 to 246 form a coiled coil; it reads LSSYEEKENLFKEQVGQLRQR. The chain crosses the membrane as a helical span at residues 689 to 709; the sequence is PPAWTVLLLAILGYNEFIFLL. The Lumenal segment spans residues 710 to 712; sequence RNP. The helical transmembrane segment at 713–733 threads the bilayer; the sequence is LYLLGLFVAFVVSYAAWLQYD. The Cytoplasmic segment spans residues 734 to 823; it reads ITAYFRHGTL…SVGSNSDDES (90 aa). Residues 770 to 823 are disordered; the sequence is NQKSSSHPPRHRPPLHPQSFRNQAQQQSQAQVQYQAPSSLSSSSSVGSNSDDES. Residues 786–823 show a composition bias toward low complexity; the sequence is PQSFRNQAQQQSQAQVQYQAPSSLSSSSSVGSNSDDES.

It belongs to the TRAFAC class dynamin-like GTPase superfamily. GB1/RHD3 GTPase family. RHD3 subfamily.

It localises to the endoplasmic reticulum membrane. Its function is as follows. Probable GTP-binding protein that may be involved in cell development. The polypeptide is Protein ROOT HAIR DEFECTIVE 3 homolog 2 (Oryza sativa subsp. japonica (Rice)).